We begin with the raw amino-acid sequence, 397 residues long: Succinate--CoA ligase [ADP-forming] subunit beta (397 aa).

The region spanning 9–254 is the ATP-grasp domain; that stretch reads KALLKGYGAP…ETEEDAKEIE (246 aa). ATP contacts are provided by residues Lys46, 53–55, Glu109, Ala112, and Glu117; that span reads GRG. Residues Asn209 and Asp223 each contribute to the Mg(2+) site. Residues Asn274 and 331–333 contribute to the substrate site; that span reads GIM.

The protein belongs to the succinate/malate CoA ligase beta subunit family. Heterotetramer of two alpha and two beta subunits. Mg(2+) serves as cofactor.

It carries out the reaction succinate + ATP + CoA = succinyl-CoA + ADP + phosphate. The catalysed reaction is GTP + succinate + CoA = succinyl-CoA + GDP + phosphate. It participates in carbohydrate metabolism; tricarboxylic acid cycle; succinate from succinyl-CoA (ligase route): step 1/1. Functionally, succinyl-CoA synthetase functions in the citric acid cycle (TCA), coupling the hydrolysis of succinyl-CoA to the synthesis of either ATP or GTP and thus represents the only step of substrate-level phosphorylation in the TCA. The beta subunit provides nucleotide specificity of the enzyme and binds the substrate succinate, while the binding sites for coenzyme A and phosphate are found in the alpha subunit. This is Succinate--CoA ligase [ADP-forming] subunit beta from Rhizobium leguminosarum bv. trifolii (strain WSM2304).